The sequence spans 930 residues: Xanthan lyase (930 aa).

The first 25 residues, 1–25, serve as a signal peptide directing secretion; sequence MLSGILIAALLMTLWGGWQPDIAHA. Residues 146–148, H246, Y255, R309, 313–315, and N424 each bind xanthan; these read NWW and RSY. Catalysis depends on Y255, which acts as the Proton donor/acceptor. The Ca(2+) site is built by D515, D516, and E517. R612 lines the xanthan pocket. E676 contacts Ca(2+).

Belongs to the polysaccharide lyase 8 family. Monomer.

The protein localises to the secreted. It catalyses the reaction Eliminative cleavage of the terminal beta-D-mannosyl-(1-&gt;4)-beta-D-glucuronosyl linkage of the side-chain of the polysaccharide xanthan, leaving a 4-deoxy-alpha-L-threo-hex-4-enuronosyl group at the terminus of the side-chain.. With respect to regulation, activated by Co(2+) at 1 mM. Completely inhibited by Hg(2+) but not affected by other divalent cations. Intensely inhibited by NaCl and KCl at 150 mM, in particular by the Na(+) and K(+) ions but not the Cl(-) ions. Partially inhibited by iodoacetamide and N-ethylmaleimide at 1 mM but not by dithiothreitol, reduced glutathione or 2-mercaptoethanol. Plays a role in xanthan depolymerization pathway by cleaving the linkage between the terminal mannosyl and glucuronyl residues of the side chain of xanthan to liberate pyruvylated mannose. Is highly specific for pyruvylated side-chains of xanthan and is not effective with hyaluronate, chondroitin A, gellan, heparin or pectin. The chain is Xanthan lyase from Bacillus sp. (strain GL1).